A 92-amino-acid polypeptide reads, in one-letter code: Small ribosomal subunit protein uS19c (92 aa).

Belongs to the universal ribosomal protein uS19 family.

It is found in the plastid. The protein localises to the chloroplast. Its function is as follows. Protein S19 forms a complex with S13 that binds strongly to the 16S ribosomal RNA. The chain is Small ribosomal subunit protein uS19c from Chlorokybus atmophyticus (Soil alga).